The sequence spans 210 residues: Cell division protein SepF (210 aa).

It belongs to the SepF family. In terms of assembly, homodimer. Interacts with FtsZ.

It is found in the cytoplasm. Cell division protein that is part of the divisome complex and is recruited early to the Z-ring. Probably stimulates Z-ring formation, perhaps through the cross-linking of FtsZ protofilaments. Its function overlaps with FtsA. This chain is Cell division protein SepF, found in Mycobacterium leprae (strain Br4923).